Consider the following 350-residue polypeptide: Probable V-type proton ATPase subunit d 2 (350 aa).

Belongs to the V-ATPase V0D/AC39 subunit family. As to quaternary structure, V-ATPase is a heteromultimeric enzyme made up of two complexes: the ATP-hydrolytic V1 complex and the proton translocation V0 complex. The V1 complex consists of three catalytic AB heterodimers that form a heterohexamer, three peripheral stalks each consisting of EG heterodimers, one central rotor including subunits D and F, and the regulatory subunits C and H. The proton translocation complex V0 consists of the proton transport subunit a, a ring of proteolipid subunits c9c'', rotary subunit d, subunits e and f, and the accessory subunits VhaAC45 and ATP6AP2.

In terms of biological role, subunit of the V0 complex of vacuolar(H+)-ATPase (V-ATPase), a multisubunit enzyme composed of a peripheral complex (V1) that hydrolyzes ATP and a membrane integral complex (V0) that translocates protons. V-ATPase is responsible for acidifying and maintaining the pH of intracellular compartments and in some cell types, is targeted to the plasma membrane, where it is responsible for acidifying the extracellular environment. May play a role in coupling of proton transport and ATP hydrolysis. The polypeptide is Probable V-type proton ATPase subunit d 2 (VhaAC39-2) (Drosophila melanogaster (Fruit fly)).